We begin with the raw amino-acid sequence, 618 residues long: Glutamine--fructose-6-phosphate aminotransferase [isomerizing] (618 aa).

Residue C2 is the Nucleophile; for GATase activity of the active site. Residues 2-226 (CGIVGYAGRN…DFETAVLSPT (225 aa)) form the Glutamine amidotransferase type-2 domain. Residues 69–94 (HTRWATHGRPSTKNAHPHNSGGNPGK) form a disordered region. SIS domains lie at 295–434 (SEDE…VRDR) and 467–608 (CAEG…IDKP). The active-site For Fru-6P isomerization activity is the K613.

As to quaternary structure, homodimer.

It is found in the cytoplasm. The enzyme catalyses D-fructose 6-phosphate + L-glutamine = D-glucosamine 6-phosphate + L-glutamate. Its function is as follows. Catalyzes the first step in hexosamine metabolism, converting fructose-6P into glucosamine-6P using glutamine as a nitrogen source. This Methanosarcina acetivorans (strain ATCC 35395 / DSM 2834 / JCM 12185 / C2A) protein is Glutamine--fructose-6-phosphate aminotransferase [isomerizing].